The chain runs to 206 residues: Protein GrpE (206 aa).

It belongs to the GrpE family. Homodimer.

It is found in the cytoplasm. Participates actively in the response to hyperosmotic and heat shock by preventing the aggregation of stress-denatured proteins, in association with DnaK and GrpE. It is the nucleotide exchange factor for DnaK and may function as a thermosensor. Unfolded proteins bind initially to DnaJ; upon interaction with the DnaJ-bound protein, DnaK hydrolyzes its bound ATP, resulting in the formation of a stable complex. GrpE releases ADP from DnaK; ATP binding to DnaK triggers the release of the substrate protein, thus completing the reaction cycle. Several rounds of ATP-dependent interactions between DnaJ, DnaK and GrpE are required for fully efficient folding. The chain is Protein GrpE from Shewanella baltica (strain OS223).